The chain runs to 398 residues: Phosphoglycerate kinase (398 aa).

Substrate-binding positions include 21-23 (DFN), R36, 59-62 (HLGR), R119, and R157. ATP-binding positions include K208, G296, E327, and 354-357 (GGDS).

Belongs to the phosphoglycerate kinase family. As to quaternary structure, monomer.

The protein resides in the cytoplasm. The catalysed reaction is (2R)-3-phosphoglycerate + ATP = (2R)-3-phospho-glyceroyl phosphate + ADP. It functions in the pathway carbohydrate degradation; glycolysis; pyruvate from D-glyceraldehyde 3-phosphate: step 2/5. This Streptococcus uberis (strain ATCC BAA-854 / 0140J) protein is Phosphoglycerate kinase.